Here is a 336-residue protein sequence, read N- to C-terminus: NADH-quinone oxidoreductase subunit H (336 aa).

8 helical membrane passes run 14 to 34 (IIVA…AFLV), 82 to 102 (IIFL…WAVI), 115 to 135 (VGIL…IMAG), 161 to 181 (IGLV…SDVV), 186 to 206 (TVWF…SALA), 247 to 267 (ILMS…PLDV), 273 to 293 (VPGP…FVWV), and 312 to 332 (VFLP…VTFD).

This sequence belongs to the complex I subunit 1 family. As to quaternary structure, NDH-1 is composed of 14 different subunits. Subunits NuoA, H, J, K, L, M, N constitute the membrane sector of the complex.

The protein resides in the cell inner membrane. The enzyme catalyses a quinone + NADH + 5 H(+)(in) = a quinol + NAD(+) + 4 H(+)(out). NDH-1 shuttles electrons from NADH, via FMN and iron-sulfur (Fe-S) centers, to quinones in the respiratory chain. The immediate electron acceptor for the enzyme in this species is believed to be ubiquinone. Couples the redox reaction to proton translocation (for every two electrons transferred, four hydrogen ions are translocated across the cytoplasmic membrane), and thus conserves the redox energy in a proton gradient. This subunit may bind ubiquinone. The protein is NADH-quinone oxidoreductase subunit H of Rhodospirillum centenum (strain ATCC 51521 / SW).